We begin with the raw amino-acid sequence, 535 residues long: Glucose-6-phosphate isomerase (535 aa).

Glu347 functions as the Proton donor in the catalytic mechanism. Active-site residues include His378 and Lys493.

Belongs to the GPI family.

It localises to the cytoplasm. The catalysed reaction is alpha-D-glucose 6-phosphate = beta-D-fructose 6-phosphate. It functions in the pathway carbohydrate biosynthesis; gluconeogenesis. The protein operates within carbohydrate degradation; glycolysis; D-glyceraldehyde 3-phosphate and glycerone phosphate from D-glucose: step 2/4. In terms of biological role, catalyzes the reversible isomerization of glucose-6-phosphate to fructose-6-phosphate. The sequence is that of Glucose-6-phosphate isomerase from Chlamydia felis (strain Fe/C-56) (Chlamydophila felis).